The sequence spans 815 residues: cGMP-specific 3',5'-cyclic phosphodiesterase delta (815 aa).

The Cytoplasmic portion of the chain corresponds to 1–56 (MNEYNNDNMEQEKEKKKEEQKYKNIIKKEYFIFPRLYDKNKEIEYNKLRIHNIKEY). A helical membrane pass occupies residues 57–77 (ICIHLTISLFIILIECFVFSF). Over 78-86 (NLNIKDTTY) the chain is Extracellular. The chain crosses the membrane as a helical span at residues 87-107 (VEICVVIFSILNCLMHIVVLI). The Cytoplasmic segment spans residues 108–120 (KMYFFTSESVYTK). Residues 121-141 (GVFIGYIVLNQVFQFLSLYFF) traverse the membrane as a helical segment. Topologically, residues 142-160 (TKRNEQSKNDIAHLKYYDN) are extracellular. The chain crosses the membrane as a helical span at residues 161-181 (SFNLYVHFFVDSVFILCLPAL). At 182 to 183 (SF) the chain is on the cytoplasmic side. The chain crosses the membrane as a helical span at residues 184–204 (FLSVLFMMMFLCLNILLINMI). Residues 205-210 (KFNKTN) lie on the Extracellular side of the membrane. An N-linked (GlcNAc...) asparagine glycan is attached at Asn207. A helical transmembrane segment spans residues 211–231 (YGSDIYHICLLSVVLLMFLIL). Over 232–815 (RYMMEERNRL…FKEEIKHGKL (584 aa)) the chain is Cytoplasmic. Residues 384-762 (YEVEVLKNIK…QTWRLIEKNI (379 aa)) form the PDEase domain. The active-site Proton donor is His459. Residue 459–463 (HNANH) participates in 3',5'-cyclic GMP binding. His463, His499, Asp500, and Asp616 together coordinate a divalent metal cation. 3',5'-cyclic GMP-binding residues include Asp500, Asp616, and Gln715.

The protein belongs to the cyclic nucleotide phosphodiesterase family. It depends on a divalent metal cation as a cofactor.

Its subcellular location is the membrane. It carries out the reaction 3',5'-cyclic GMP + H2O = GMP + H(+). The protein operates within purine metabolism; 3',5'-cyclic GMP degradation; GMP from 3',5'-cyclic GMP: step 1/1. Specifically hydrolyzes the second messenger cGMP, which is a key regulator of many important physiological processes. Probably by regulating cGMP levels, required for activation of gametogenesis. This chain is cGMP-specific 3',5'-cyclic phosphodiesterase delta, found in Plasmodium falciparum (isolate 3D7).